Reading from the N-terminus, the 263-residue chain is Ribosomal RNA small subunit methyltransferase A (263 aa).

Residues Ile-18, Gly-43, Glu-65, Asp-91, and Asn-110 each contribute to the S-adenosyl-L-methionine site.

This sequence belongs to the class I-like SAM-binding methyltransferase superfamily. rRNA adenine N(6)-methyltransferase family. RsmA subfamily.

It localises to the cytoplasm. It carries out the reaction adenosine(1518)/adenosine(1519) in 16S rRNA + 4 S-adenosyl-L-methionine = N(6)-dimethyladenosine(1518)/N(6)-dimethyladenosine(1519) in 16S rRNA + 4 S-adenosyl-L-homocysteine + 4 H(+). Functionally, specifically dimethylates two adjacent adenosines (A1518 and A1519) in the loop of a conserved hairpin near the 3'-end of 16S rRNA in the 30S particle. May play a critical role in biogenesis of 30S subunits. This is Ribosomal RNA small subunit methyltransferase A from Ehrlichia chaffeensis (strain ATCC CRL-10679 / Arkansas).